The following is a 572-amino-acid chain: Urease subunit alpha (572 aa).

In terms of domain architecture, Urease spans glycine 134–phenylalanine 572. Ni(2+) contacts are provided by histidine 139, histidine 141, and lysine 222. N6-carboxylysine is present on lysine 222. Histidine 224 is a substrate binding site. Residues histidine 251 and histidine 277 each contribute to the Ni(2+) site. Histidine 325 acts as the Proton donor in catalysis. Aspartate 365 serves as a coordination point for Ni(2+).

It belongs to the metallo-dependent hydrolases superfamily. Urease alpha subunit family. In terms of assembly, heterotrimer of UreA (gamma), UreB (beta) and UreC (alpha) subunits. Three heterotrimers associate to form the active enzyme. It depends on Ni cation as a cofactor. In terms of processing, carboxylation allows a single lysine to coordinate two nickel ions.

The protein resides in the cytoplasm. The enzyme catalyses urea + 2 H2O + H(+) = hydrogencarbonate + 2 NH4(+). The protein operates within nitrogen metabolism; urea degradation; CO(2) and NH(3) from urea (urease route): step 1/1. The sequence is that of Urease subunit alpha from Polaromonas sp. (strain JS666 / ATCC BAA-500).